We begin with the raw amino-acid sequence, 383 residues long: Protein FAM217B (383 aa).

6 disordered regions span residues 1 to 70, 89 to 115, 200 to 222, 232 to 251, 284 to 325, and 338 to 383; these read MNAG…CQGA, ADED…PPDL, KAKG…KSPG, SKPL…RKKA, QTLE…HIRV, and SCKA…YKLK. The segment covering 8-43 has biased composition (polar residues); the sequence is NKVQHSKNSSGKRQSKSQVPHASSQPRSSLTAVTQP. Positions 44-56 are enriched in basic and acidic residues; that stretch reads TEEKLKESISPEA. The segment covering 374 to 383 has biased composition (polar residues); that stretch reads GVKQNTYKLK.

This sequence belongs to the FAM217 family.

The chain is Protein FAM217B (FAM217B) from Homo sapiens (Human).